The following is a 509-amino-acid chain: Oligo-1,6-glucosidase (509 aa).

Asp-198 functions as the Nucleophile in the catalytic mechanism. The active-site Proton donor is Glu-254.

Belongs to the glycosyl hydrolase 13 family.

The protein resides in the cytoplasm. It carries out the reaction Hydrolysis of (1-&gt;6)-alpha-D-glucosidic linkages in some oligosaccharides produced from starch and glycogen by alpha-amylase, and in isomaltose.. The sequence is that of Oligo-1,6-glucosidase (malL) from Bacillus sp. (strain F5).